We begin with the raw amino-acid sequence, 397 residues long: Acetate kinase (397 aa).

N9 contributes to the Mg(2+) binding site. Residue K16 participates in ATP binding. Residue R87 coordinates substrate. Residue D144 is the Proton donor/acceptor of the active site. Residues H204–G208, D279–R281, and G327–N331 each bind ATP. Residue E381 coordinates Mg(2+).

This sequence belongs to the acetokinase family. In terms of assembly, homodimer. Mg(2+) serves as cofactor. It depends on Mn(2+) as a cofactor.

Its subcellular location is the cytoplasm. It carries out the reaction acetate + ATP = acetyl phosphate + ADP. Its pathway is metabolic intermediate biosynthesis; acetyl-CoA biosynthesis; acetyl-CoA from acetate: step 1/2. Catalyzes the formation of acetyl phosphate from acetate and ATP. Can also catalyze the reverse reaction. The sequence is that of Acetate kinase from Chromobacterium violaceum (strain ATCC 12472 / DSM 30191 / JCM 1249 / CCUG 213 / NBRC 12614 / NCIMB 9131 / NCTC 9757 / MK).